A 209-amino-acid chain; its full sequence is Large ribosomal subunit protein bL25 (209 aa).

Disordered regions lie at residues 1-20 (MSKSYTLKAEKRERVGKGSS) and 190-209 (LDVSDETSEQEKDEGETQTS). Over residues 8-20 (KAEKRERVGKGSS) the composition is skewed to basic and acidic residues. Over residues 192–209 (VSDETSEQEKDEGETQTS) the composition is skewed to acidic residues.

It belongs to the bacterial ribosomal protein bL25 family. CTC subfamily. Part of the 50S ribosomal subunit; part of the 5S rRNA/L5/L18/L25 subcomplex. Contacts the 5S rRNA. Binds to the 5S rRNA independently of L5 and L18.

This is one of the proteins that binds to the 5S RNA in the ribosome where it forms part of the central protuberance. This is Large ribosomal subunit protein bL25 from Bartonella tribocorum (strain CIP 105476 / IBS 506).